Reading from the N-terminus, the 384-residue chain is Dual-specificity RNA methyltransferase RlmN (384 aa).

E105 acts as the Proton acceptor in catalysis. Residues E111–D350 form the Radical SAM core domain. Cysteines 118 and 355 form a disulfide. Residues C125, C129, and C132 each coordinate [4Fe-4S] cluster. S-adenosyl-L-methionine contacts are provided by residues G179–E180, S211, S233–H235, and N312. C355 (S-methylcysteine intermediate) is an active-site residue.

This sequence belongs to the radical SAM superfamily. RlmN family. [4Fe-4S] cluster is required as a cofactor.

The protein resides in the cytoplasm. It carries out the reaction adenosine(2503) in 23S rRNA + 2 reduced [2Fe-2S]-[ferredoxin] + 2 S-adenosyl-L-methionine = 2-methyladenosine(2503) in 23S rRNA + 5'-deoxyadenosine + L-methionine + 2 oxidized [2Fe-2S]-[ferredoxin] + S-adenosyl-L-homocysteine. The catalysed reaction is adenosine(37) in tRNA + 2 reduced [2Fe-2S]-[ferredoxin] + 2 S-adenosyl-L-methionine = 2-methyladenosine(37) in tRNA + 5'-deoxyadenosine + L-methionine + 2 oxidized [2Fe-2S]-[ferredoxin] + S-adenosyl-L-homocysteine. Specifically methylates position 2 of adenine 2503 in 23S rRNA and position 2 of adenine 37 in tRNAs. m2A2503 modification seems to play a crucial role in the proofreading step occurring at the peptidyl transferase center and thus would serve to optimize ribosomal fidelity. This is Dual-specificity RNA methyltransferase RlmN from Escherichia fergusonii (strain ATCC 35469 / DSM 13698 / CCUG 18766 / IAM 14443 / JCM 21226 / LMG 7866 / NBRC 102419 / NCTC 12128 / CDC 0568-73).